A 215-amino-acid chain; its full sequence is Adenylate kinase (215 aa).

10–15 (GAGKGT) provides a ligand contact to ATP. Positions 30–59 (STGDMFRLAIKEGTELGKKAKEFMDQGDLV) are NMP. Residues Thr-31, Arg-36, 57–59 (DLV), 85–88 (GFPR), and Gln-92 each bind AMP. An LID region spans residues 126-163 (GRRICPTCGTAYHVVYNPPKEEGICDKDGSQLIQRDDD). An ATP-binding site is contributed by Arg-127. Residues Cys-130, Cys-133, Cys-150, and Asp-153 each coordinate Zn(2+). AMP is bound by residues Arg-160 and Arg-171. ATP is bound at residue Arg-199.

The protein belongs to the adenylate kinase family. Monomer.

Its subcellular location is the cytoplasm. The catalysed reaction is AMP + ATP = 2 ADP. It functions in the pathway purine metabolism; AMP biosynthesis via salvage pathway; AMP from ADP: step 1/1. In terms of biological role, catalyzes the reversible transfer of the terminal phosphate group between ATP and AMP. Plays an important role in cellular energy homeostasis and in adenine nucleotide metabolism. This Oceanobacillus iheyensis (strain DSM 14371 / CIP 107618 / JCM 11309 / KCTC 3954 / HTE831) protein is Adenylate kinase.